Consider the following 301-residue polypeptide: Nitric oxide synthase-interacting protein (301 aa).

Ser36 bears the Phosphoserine mark. A U-box-like region spans residues Asp55 to Leu75. Residues Lys78–Glu101 carry the Nuclear localization signal motif. Positions Pro131–Asp154 are disordered.

It belongs to the NOSIP family. As to quaternary structure, interacts with NOS1 and NOS3. Interacts with PP2A holoenzyme, containing PPP2CA, PPP2CB, PPP2R1A and PPP2R2A subunits.

Its subcellular location is the cytoplasm. It is found in the nucleus. The catalysed reaction is S-ubiquitinyl-[E2 ubiquitin-conjugating enzyme]-L-cysteine + [acceptor protein]-L-lysine = [E2 ubiquitin-conjugating enzyme]-L-cysteine + N(6)-ubiquitinyl-[acceptor protein]-L-lysine.. It functions in the pathway protein modification; protein ubiquitination. Functionally, E3 ubiquitin-protein ligase that is essential for proper development of the forebrain, the eye and the face. Catalyzes monoubiquitination of serine/threonine-protein phosphatase 2A (PP2A) catalytic subunit PPP2CA/PPP2CB. Negatively regulates nitric oxide production by inducing NOS1 and NOS3 translocation to actin cytoskeleton and inhibiting their enzymatic activity. In Mus musculus (Mouse), this protein is Nitric oxide synthase-interacting protein (Nosip).